A 164-amino-acid polypeptide reads, in one-letter code: Succinate dehydrogenase assembly factor 2, mitochondrial (164 aa).

A mitochondrion-targeting transit peptide spans 1–27 (MAVVTLIPTLARVLSKHSLLSPLLSVT).

Belongs to the SDHAF2 family. As to quaternary structure, interacts with SDHA within the SDH catalytic dimer.

It is found in the mitochondrion matrix. Functionally, plays an essential role in the assembly of succinate dehydrogenase (SDH), an enzyme complex (also referred to as respiratory complex II) that is a component of both the tricarboxylic acid (TCA) cycle and the mitochondrial electron transport chain, and which couples the oxidation of succinate to fumarate with the reduction of ubiquinone (coenzyme Q) to ubiquinol. Required for flavinylation (covalent attachment of FAD) of the flavoprotein subunit SDHA of the SDH catalytic dimer. The sequence is that of Succinate dehydrogenase assembly factor 2, mitochondrial from Rattus norvegicus (Rat).